Here is a 259-residue protein sequence, read N- to C-terminus: QWGDEGKGKIVDLLTDRVKYVVRYQGGRGAGHTLILNGEKTVLRLIPSGILRDNVTCLIGNGVVLSPAALMQEMSELENRGVNVRDRLLISEACPLILPYHVAMDHAREARWAKRPIRATGRGIGPAYEDKVARRGLRVGDLFDRAAFAEKLKNILDYYNFQLVNYYKVEPVDYQKTLDDVFAVADIITGMVADITTILDTARKNGDNILFEGAQGTMLDIDHGTYPYVTSSNTAGGVASGSGFGPRNLDYVLGIIKAY.

Residues 3–9 (GDEGKGK) and 31–33 (GHT) each bind GTP. The Proton acceptor role is filled by Asp-4. Mg(2+) contacts are provided by Asp-4 and Gly-31. IMP is bound at residue 4–7 (DEGK). His-32 acts as the Proton donor in catalysis. Thr-120, Arg-134, Gln-215, and Thr-230 together coordinate IMP.

This sequence belongs to the adenylosuccinate synthetase family. As to quaternary structure, homodimer. It depends on Mg(2+) as a cofactor.

The protein resides in the cytoplasm. The catalysed reaction is IMP + L-aspartate + GTP = N(6)-(1,2-dicarboxyethyl)-AMP + GDP + phosphate + 2 H(+). It functions in the pathway purine metabolism; AMP biosynthesis via de novo pathway; AMP from IMP: step 1/2. Plays an important role in the de novo pathway of purine nucleotide biosynthesis. Catalyzes the first committed step in the biosynthesis of AMP from IMP. In Aggregatibacter actinomycetemcomitans (Actinobacillus actinomycetemcomitans), this protein is Adenylosuccinate synthetase.